The primary structure comprises 105 residues: ATP-dependent Clp protease adapter protein ClpS (105 aa).

The protein belongs to the ClpS family. As to quaternary structure, binds to the N-terminal domain of the chaperone ClpA.

In terms of biological role, involved in the modulation of the specificity of the ClpAP-mediated ATP-dependent protein degradation. The polypeptide is ATP-dependent Clp protease adapter protein ClpS (Streptomyces avermitilis (strain ATCC 31267 / DSM 46492 / JCM 5070 / NBRC 14893 / NCIMB 12804 / NRRL 8165 / MA-4680)).